A 363-amino-acid chain; its full sequence is Dihydroorotate dehydrogenase (quinone) (363 aa).

FMN contacts are provided by residues 77–81 and threonine 101; that span reads AGMDK. Position 81 (lysine 81) interacts with substrate. A substrate-binding site is contributed by 126 to 130; sequence NRMGF. Serine 155 and asparagine 188 together coordinate FMN. Residue asparagine 188 participates in substrate binding. Residue serine 191 is the Nucleophile of the active site. Position 193 (asparagine 193) interacts with substrate. FMN is bound by residues lysine 234 and threonine 262. 263–264 is a substrate binding site; the sequence is NT. Residues glycine 287, glycine 316, and 337-338 each bind FMN; that span reads YT.

Belongs to the dihydroorotate dehydrogenase family. Type 2 subfamily. In terms of assembly, monomer. Requires FMN as cofactor.

Its subcellular location is the cell membrane. It catalyses the reaction (S)-dihydroorotate + a quinone = orotate + a quinol. It participates in pyrimidine metabolism; UMP biosynthesis via de novo pathway; orotate from (S)-dihydroorotate (quinone route): step 1/1. Catalyzes the conversion of dihydroorotate to orotate with quinone as electron acceptor. The polypeptide is Dihydroorotate dehydrogenase (quinone) (Chloroflexus aurantiacus (strain ATCC 29366 / DSM 635 / J-10-fl)).